A 1053-amino-acid chain; its full sequence is DNA-directed RNA polymerase subunit beta' (1053 aa).

Zn(2+) contacts are provided by C60, C62, C75, and C78. 3 residues coordinate Mg(2+): D449, D451, and D453.

This sequence belongs to the RNA polymerase beta' chain family. As to quaternary structure, the RNAP catalytic core consists of 2 alpha, 1 beta, 1 beta' and 1 omega subunit. When a sigma factor is associated with the core the holoenzyme is formed, which can initiate transcription. The cofactor is Mg(2+). Zn(2+) serves as cofactor.

It catalyses the reaction RNA(n) + a ribonucleoside 5'-triphosphate = RNA(n+1) + diphosphate. Functionally, DNA-dependent RNA polymerase catalyzes the transcription of DNA into RNA using the four ribonucleoside triphosphates as substrates. The sequence is that of DNA-directed RNA polymerase subunit beta' from Brochothrix thermosphacta (Microbacterium thermosphactum).